Here is a 284-residue protein sequence, read N- to C-terminus: Shikimate dehydrogenase (NADP(+)) (284 aa).

Residues Ser-20–Ser-22 and Ser-67 contribute to the shikimate site. Lys-71 (proton acceptor) is an active-site residue. Asp-83 is a binding site for NADP(+). Residues Asn-92 and Asp-107 each coordinate shikimate. Residues Gly-129–Ala-133 and Ile-227 contribute to the NADP(+) site. Tyr-229 contacts shikimate. Gly-250 provides a ligand contact to NADP(+).

Belongs to the shikimate dehydrogenase family. Homodimer.

The enzyme catalyses shikimate + NADP(+) = 3-dehydroshikimate + NADPH + H(+). The protein operates within metabolic intermediate biosynthesis; chorismate biosynthesis; chorismate from D-erythrose 4-phosphate and phosphoenolpyruvate: step 4/7. Involved in the biosynthesis of the chorismate, which leads to the biosynthesis of aromatic amino acids. Catalyzes the reversible NADPH linked reduction of 3-dehydroshikimate (DHSA) to yield shikimate (SA). This chain is Shikimate dehydrogenase (NADP(+)), found in Streptococcus pneumoniae serotype 2 (strain D39 / NCTC 7466).